Consider the following 267-residue polypeptide: Tryptophan synthase alpha chain (267 aa).

Residues Glu-49 and Asp-60 each act as proton acceptor in the active site.

The protein belongs to the TrpA family. Tetramer of two alpha and two beta chains.

It carries out the reaction (1S,2R)-1-C-(indol-3-yl)glycerol 3-phosphate + L-serine = D-glyceraldehyde 3-phosphate + L-tryptophan + H2O. It functions in the pathway amino-acid biosynthesis; L-tryptophan biosynthesis; L-tryptophan from chorismate: step 5/5. Functionally, the alpha subunit is responsible for the aldol cleavage of indoleglycerol phosphate to indole and glyceraldehyde 3-phosphate. In Salinispora tropica (strain ATCC BAA-916 / DSM 44818 / JCM 13857 / NBRC 105044 / CNB-440), this protein is Tryptophan synthase alpha chain.